Here is a 426-residue protein sequence, read N- to C-terminus: Histidine--tRNA ligase (426 aa).

Belongs to the class-II aminoacyl-tRNA synthetase family. In terms of assembly, homodimer.

It localises to the cytoplasm. It carries out the reaction tRNA(His) + L-histidine + ATP = L-histidyl-tRNA(His) + AMP + diphosphate + H(+). This is Histidine--tRNA ligase from Prochlorococcus marinus (strain MIT 9312).